The primary structure comprises 540 residues: Cytochrome P450 monooxygenase ptmG (540 aa).

N-linked (GlcNAc...) asparagine glycosylation is present at asparagine 17. A run of 2 helical transmembrane segments spans residues 20 to 40 (VMTL…YICI) and 325 to 345 (AAFL…FLLL). Cysteine 474 contacts heme.

The protein belongs to the cytochrome P450 family. The cofactor is heme.

The protein resides in the membrane. It participates in secondary metabolite biosynthesis. Its function is as follows. Cytochrome P450 monooxygenase; part of the gene cluster that mediates the biosynthesis of the indole diterpenes penitrems. The geranylgeranyl diphosphate (GGPP) synthase ptmG catalyzes the first step in penitrem biosynthesis via conversion of farnesyl pyrophosphate and isopentyl pyrophosphate into geranylgeranyl pyrophosphate (GGPP). Condensation of indole-3-glycerol phosphate with GGPP by the prenyl transferase ptmC then forms 3-geranylgeranylindole (3-GGI). Epoxidation by the FAD-dependent monooxygenase ptmM leads to a epoxidized-GGI that is substrate of the terpene cyclase ptmB for cyclization to yield paspaline. Paspaline is subsequently converted to 13-desoxypaxilline by the cytochrome P450 monooxygenase ptmP, the latter being then converted to paxilline by the cytochrome P450 monooxygenase ptmQ. Paxilline is converted to beta-paxitriol via C-10 ketoreduction by the short-chain dehydrogenase ptmH which can be monoprenylated at the C-20 by the indole diterpene prenyltransferase ptmD. A two-step elimination (acetylation and elimination) process performed by the O-acetyltransferase ptmV and ptmI leads to the production of the prenylated form of penijanthine. The FAD-linked oxidoreductase ptmO then converts the prenylated form of penijanthine into PC-M5 which is in turn transformed into PC-M4 by the aromatic dimethylallyltransferase ptmE. Five sequential oxidative transformations performed by the cytochrome P450 monooxygenases ptmK, ptmU, ptmL, ptmN and ptmJ yield the various penitrem compounds. PtmK, ptmU and ptmM are involved in the formation of the key bicyclic ring of penitrem C via the formation of the intermediates secopenitrem D and penitrem D. PtmL catalyzes the epoxidation of penitrem D and C to yield penitrem B and F, respectively. PtmJ catalyzes the last benzylic hydroxylation to convert penitrem B to prenitrem E and penitrem F to penitrem A. The polypeptide is Cytochrome P450 monooxygenase ptmG (Penicillium ochrochloron).